The following is a 276-amino-acid chain: Shikimate dehydrogenase (NADP(+)) (276 aa).

Shikimate-binding positions include 18-20 and Thr-65; that span reads SRS. Lys-69 acts as the Proton acceptor in catalysis. Positions 90 and 106 each coordinate shikimate. Residues 132–136 and Ile-221 contribute to the NADP(+) site; that span reads GAGGA. Tyr-223 is a shikimate binding site. Gly-244 provides a ligand contact to NADP(+).

Belongs to the shikimate dehydrogenase family. In terms of assembly, homodimer.

It catalyses the reaction shikimate + NADP(+) = 3-dehydroshikimate + NADPH + H(+). Its pathway is metabolic intermediate biosynthesis; chorismate biosynthesis; chorismate from D-erythrose 4-phosphate and phosphoenolpyruvate: step 4/7. Functionally, involved in the biosynthesis of the chorismate, which leads to the biosynthesis of aromatic amino acids. Catalyzes the reversible NADPH linked reduction of 3-dehydroshikimate (DHSA) to yield shikimate (SA). The chain is Shikimate dehydrogenase (NADP(+)) from Paramagnetospirillum magneticum (strain ATCC 700264 / AMB-1) (Magnetospirillum magneticum).